Here is a 61-residue protein sequence, read N- to C-terminus: Japonicin-1CDYa (61 aa).

The signal sequence occupies residues 1–22 (MFTLKKSLLLLFFLGVINVSLC). Residues 23-45 (EEERDADEEERRDDPEERDVEVE) constitute a propeptide that is removed on maturation. An intrachain disulfide couples C55 to C61.

This sequence belongs to the frog skin active peptide (FSAP) family. Brevinin subfamily. In terms of tissue distribution, expressed by the skin glands.

The protein resides in the secreted. In terms of biological role, antimicrobial peptide. Has low activity against the Gram-positive bacterium S.aureus (MIC&gt;100 uM) and the Gram-negative bacterium E.coli (MIC=25 uM). Lacks hemolytic activity against human erythrocytes. The protein is Japonicin-1CDYa of Rana dybowskii (Dybovsky's frog).